We begin with the raw amino-acid sequence, 319 residues long: Acetyl-coenzyme A carboxylase carboxyl transferase subunit alpha (319 aa).

The CoA carboxyltransferase C-terminal domain maps to 35-296 (NIDEEVHRLR…KAQLLADLAD (262 aa)).

Belongs to the AccA family. In terms of assembly, acetyl-CoA carboxylase is a heterohexamer composed of biotin carboxyl carrier protein (AccB), biotin carboxylase (AccC) and two subunits each of ACCase subunit alpha (AccA) and ACCase subunit beta (AccD).

It localises to the cytoplasm. It carries out the reaction N(6)-carboxybiotinyl-L-lysyl-[protein] + acetyl-CoA = N(6)-biotinyl-L-lysyl-[protein] + malonyl-CoA. It participates in lipid metabolism; malonyl-CoA biosynthesis; malonyl-CoA from acetyl-CoA: step 1/1. Functionally, component of the acetyl coenzyme A carboxylase (ACC) complex. First, biotin carboxylase catalyzes the carboxylation of biotin on its carrier protein (BCCP) and then the CO(2) group is transferred by the carboxyltransferase to acetyl-CoA to form malonyl-CoA. The sequence is that of Acetyl-coenzyme A carboxylase carboxyl transferase subunit alpha from Shigella sonnei (strain Ss046).